An 88-amino-acid chain; its full sequence is Small ribosomal subunit protein bS20 (88 aa).

The disordered stretch occupies residues 1 to 27; the sequence is MANIKSQIKRNKTNEKARLRNKAVKSS.

It belongs to the bacterial ribosomal protein bS20 family.

Binds directly to 16S ribosomal RNA. The chain is Small ribosomal subunit protein bS20 from Streptomyces griseus subsp. griseus (strain JCM 4626 / CBS 651.72 / NBRC 13350 / KCC S-0626 / ISP 5235).